Consider the following 584-residue polypeptide: Ubiquitin-like-specific protease 1D (584 aa).

2 disordered regions span residues 28–64 and 99–323; these read DKED…PKLL and DLEE…QAAE. Residues 99 to 120 are compositionally biased toward basic and acidic residues; that stretch reads DLEEEKQRRVLEGSKMEVDRSS. Residues 121-132 are compositionally biased toward low complexity; sequence KVVSSTSSGSDV. 2 stretches are compositionally biased toward basic and acidic residues: residues 142–165 and 176–196; these read DTSR…KEVS and PKTD…LGCE. A compositionally biased stretch (basic residues) spans 197–207; that stretch reads RRKHKAGRKPV. The segment covering 221 to 253 has biased composition (basic and acidic residues); the sequence is GKAEHSAKQFDSGLKESKGNKKSKEPYGKKRPM. Over residues 261–274 the composition is skewed to acidic residues; sequence IDDDDDDDDDDDND. The segment covering 275 to 286 has biased composition (basic and acidic residues); the sequence is TSGHETPREWSW. Active-site residues include His-438, Asp-461, and Cys-525.

It belongs to the peptidase C48 family.

It is found in the nucleus speckle. In terms of biological role, protease that catalyzes two essential functions in the SUMO pathway: processing of full-length SUMOs to their mature forms and deconjugation of SUMO from targeted proteins. Cleaves precursors of SUM1 and SUM2, but not of SUM3 or SUM5. Able to release SUM1 and SUM2 from conjugates, but unable to cleave SUM3. Protease activity mainly directed at deconjugating SUM1 and SUM2 from their target proteins. Regulates salt stress responses and flowering time. Redundant with ULP1C. This Arabidopsis thaliana (Mouse-ear cress) protein is Ubiquitin-like-specific protease 1D (ULP1D).